The following is a 282-amino-acid chain: Nucleotide-binding protein XAC2976 (282 aa).

5-12 (GLSGSGKS) is an ATP binding site. 57–60 (DVRS) lines the GTP pocket.

Belongs to the RapZ-like family.

Its function is as follows. Displays ATPase and GTPase activities. The chain is Nucleotide-binding protein XAC2976 from Xanthomonas axonopodis pv. citri (strain 306).